The following is a 323-amino-acid chain: Cyclin-H (323 aa).

Position 5 is a phosphoserine; by CDK8 (Ser5). At Ser132 the chain carries Phosphoserine. Positions 299–323 are disordered; that stretch reads DDDYVPKKSKHEEEEWTDDDLVESL. The span at 302–311 shows a compositional bias: basic and acidic residues; that stretch reads YVPKKSKHEE. The span at 312–323 shows a compositional bias: acidic residues; sequence EEWTDDDLVESL. At Thr315 the chain carries Phosphothreonine. The residue at position 322 (Ser322) is a Phosphoserine.

This sequence belongs to the cyclin family. Cyclin C subfamily. In terms of assembly, associates primarily with CDK7 and MAT1 to form the CAK complex. CAK can further associate with the core-TFIIH to form the TFIIH basal transcription factor.

It localises to the nucleus. Regulates CDK7, the catalytic subunit of the CDK-activating kinase (CAK) enzymatic complex. CAK activates the cyclin-associated kinases CDK1, CDK2, CDK4 and CDK6 by threonine phosphorylation. CAK complexed to the core-TFIIH basal transcription factor activates RNA polymerase II by serine phosphorylation of the repetitive C-terminal domain (CTD) of its large subunit (POLR2A), allowing its escape from the promoter and elongation of the transcripts. Involved in cell cycle control and in RNA transcription by RNA polymerase II. Its expression and activity are constant throughout the cell cycle. The chain is Cyclin-H (CCNH) from Macaca fascicularis (Crab-eating macaque).